Consider the following 183-residue polypeptide: Phosphopantetheine adenylyltransferase (183 aa).

Residue serine 8 participates in substrate binding. Residues 8–9 (SF) and histidine 16 contribute to the ATP site. Residues lysine 40, threonine 72, and arginine 86 each coordinate substrate. Residues 87-89 (GLR), glutamate 97, and 122-128 (YSFLSSS) each bind ATP.

It belongs to the bacterial CoaD family. As to quaternary structure, homohexamer. Requires Mg(2+) as cofactor.

Its subcellular location is the cytoplasm. It catalyses the reaction (R)-4'-phosphopantetheine + ATP + H(+) = 3'-dephospho-CoA + diphosphate. The protein operates within cofactor biosynthesis; coenzyme A biosynthesis; CoA from (R)-pantothenate: step 4/5. In terms of biological role, reversibly transfers an adenylyl group from ATP to 4'-phosphopantetheine, yielding dephospho-CoA (dPCoA) and pyrophosphate. The chain is Phosphopantetheine adenylyltransferase from Nostoc punctiforme (strain ATCC 29133 / PCC 73102).